The primary structure comprises 180 residues: Dual-action ribosomal maturation protein DarP (180 aa).

A compositionally biased stretch (basic and acidic residues) spans 1 to 13 (MKPDKTENTEHGI). Residues 1–21 (MKPDKTENTEHGIEPVSKTKR) are disordered.

Belongs to the DarP family.

It localises to the cytoplasm. Member of a network of 50S ribosomal subunit biogenesis factors which assembles along the 30S-50S interface, preventing incorrect 23S rRNA structures from forming. Promotes peptidyl transferase center (PTC) maturation. The chain is Dual-action ribosomal maturation protein DarP from Methylobacillus flagellatus (strain ATCC 51484 / DSM 6875 / VKM B-1610 / KT).